We begin with the raw amino-acid sequence, 22 residues long: Mu-conotoxin GIIIB (22 aa).

3 cysteine pairs are disulfide-bonded: C3–C15, C4–C20, and C10–C21. 4-hydroxyproline; partial occurs at positions 6 and 7. A 4-hydroxyproline modification is found at P17. A22 carries the post-translational modification Alanine amide.

Belongs to the conotoxin M superfamily. In terms of tissue distribution, expressed by the venom duct.

Its subcellular location is the secreted. Functionally, mu-conotoxins block voltage-gated sodium channels (Nav). The protein is Mu-conotoxin GIIIB of Conus geographus (Geography cone).